The chain runs to 339 residues: UDP-galactose transporter homolog 1 (339 aa).

The Lumenal segment spans residues 1 to 4; it reads MAGS. The helical transmembrane segment at 5–25 threads the bilayer; it reads TSSLVICAIGIYATFLTWALV. Over 26 to 42 the chain is Cytoplasmic; sequence QEPLATRTWPNSMGKFQ. The helical transmembrane segment at 43–63 threads the bilayer; that stretch reads FPNVISLIQASVAMMMGYLYL. The Lumenal portion of the chain corresponds to 64–106; the sequence is NWKKVEYPPRKMIKDHWKQLMLISFTQSSSGPLATTSLKHVDY. Residues 107-127 traverse the membrane as a helical segment; that stretch reads LTYMLAKSCKMIPVLLVHLLL. At 128–136 the chain is on the cytoplasmic side; it reads YRTPIASQK. The chain crosses the membrane as a helical span at residues 137-157; sequence KVVALLVSLGVTIFTIGGNDG. Residues 158–174 are Lumenal-facing; it reads KKLKRSFNESGNDNKLQ. N165 is a glycosylation site (N-linked (GlcNAc...) asparagine). A helical membrane pass occupies residues 175–192; it reads GFGLLFSSLFLDGLTNAT. The Cytoplasmic portion of the chain corresponds to 193–214; sequence QDKLLKANKAKEKGKQTLITGA. A helical transmembrane segment spans residues 215–235; that stretch reads HLMFTLNLFVILWNILYFIVI. At 236 to 245 the chain is on the lumenal side; the sequence is DCKQWDNAVS. A helical membrane pass occupies residues 246 to 266; it reads VLTMDPQVWGYLMLYSFCGAM. Topologically, residues 267 to 280 are cytoplasmic; it reads GQCFIFYTLEQFGS. A helical transmembrane segment spans residues 281 to 303; the sequence is LVLIMITVTRKMVSMILSIIVFG. The Lumenal portion of the chain corresponds to 304–307; the sequence is KSVR. Residues 308–327 traverse the membrane as a helical segment; that stretch reads FQQWVGMFIVFGGITWEALN. At 328-339 the chain is on the cytoplasmic side; that stretch reads KKKANIPKAKSA.

This sequence belongs to the nucleotide-sugar transporter family. SLC35B subfamily.

The protein resides in the endoplasmic reticulum membrane. Functionally, may be involved in specific transport of UDP-Gal from the cytosol to the Golgi lumen. Involved in the maintenance of optimal conditions for the folding of secretory pathway proteins in the endoplasmic reticulum. Overexpression confers resistance to the immunosuppressive drug, leflunomide. The chain is UDP-galactose transporter homolog 1 (HUT1) from Saccharomyces cerevisiae (strain ATCC 204508 / S288c) (Baker's yeast).